We begin with the raw amino-acid sequence, 463 residues long: Probable ECA polymerase (463 aa).

Transmembrane regions (helical) follow at residues Phe6–Met26, Phe39–Phe59, Val65–Tyr85, Ala112–Leu132, Gly154–Leu174, Ala180–Gly200, Gly201–Gly221, Trp222–Leu242, Leu340–Ile360, Tyr377–Thr397, and Val408–Leu428.

This sequence belongs to the WzyE family. In terms of assembly, probably part of a complex composed of WzxE, WzyE and WzzE.

The protein resides in the cell inner membrane. Its pathway is bacterial outer membrane biogenesis; enterobacterial common antigen biosynthesis. Probably involved in the polymerization of enterobacterial common antigen (ECA) trisaccharide repeat units. In Pectobacterium atrosepticum (strain SCRI 1043 / ATCC BAA-672) (Erwinia carotovora subsp. atroseptica), this protein is Probable ECA polymerase.